A 158-amino-acid chain; its full sequence is Cytosine deaminase (158 aa).

The 121-residue stretch at 9–129 folds into the CMP/dCMP-type deaminase domain; that stretch reads KWDQKGMDIA…KYLQTRGHEV (121 aa). Residue Asn-51 coordinates substrate. Zn(2+) is bound at residue His-62. The active-site Proton donor is the Glu-64. Residues Cys-91 and Cys-94 each coordinate Zn(2+). Asp-155 is a binding site for substrate.

This sequence belongs to the cytidine and deoxycytidylate deaminase family. As to quaternary structure, homodimer. It depends on Zn(2+) as a cofactor.

It is found in the cytoplasm. The protein localises to the nucleus. The catalysed reaction is cytosine + H2O + H(+) = uracil + NH4(+). It functions in the pathway pyrimidine metabolism; UMP biosynthesis via salvage pathway; uracil from cytosine: step 1/1. In terms of biological role, catalyzes the hydrolytic deamination of cytosine to uracil or 5-methylcytosine to thymine. Is involved in the pyrimidine salvage pathway, which allows the cell to utilize cytosine for pyrimidine nucleotide synthesis. The chain is Cytosine deaminase from Saccharomyces cerevisiae (strain ATCC 204508 / S288c) (Baker's yeast).